A 266-amino-acid polypeptide reads, in one-letter code: Ribosomal RNA small subunit methyltransferase A (266 aa).

6 residues coordinate S-adenosyl-L-methionine: Asn-16, Leu-18, Gly-43, Glu-64, Asp-89, and Asn-110.

This sequence belongs to the class I-like SAM-binding methyltransferase superfamily. rRNA adenine N(6)-methyltransferase family. RsmA subfamily.

It is found in the cytoplasm. It catalyses the reaction adenosine(1518)/adenosine(1519) in 16S rRNA + 4 S-adenosyl-L-methionine = N(6)-dimethyladenosine(1518)/N(6)-dimethyladenosine(1519) in 16S rRNA + 4 S-adenosyl-L-homocysteine + 4 H(+). Specifically dimethylates two adjacent adenosines (A1518 and A1519) in the loop of a conserved hairpin near the 3'-end of 16S rRNA in the 30S particle. May play a critical role in biogenesis of 30S subunits. The chain is Ribosomal RNA small subunit methyltransferase A from Marinomonas sp. (strain MWYL1).